A 153-amino-acid polypeptide reads, in one-letter code: Ribosomal RNA large subunit methyltransferase H (153 aa).

S-adenosyl-L-methionine is bound by residues L71, G102, and 121–126 (LSRMTL).

It belongs to the RNA methyltransferase RlmH family. Homodimer.

It localises to the cytoplasm. It catalyses the reaction pseudouridine(1915) in 23S rRNA + S-adenosyl-L-methionine = N(3)-methylpseudouridine(1915) in 23S rRNA + S-adenosyl-L-homocysteine + H(+). Its function is as follows. Specifically methylates the pseudouridine at position 1915 (m3Psi1915) in 23S rRNA. In Anaeromyxobacter sp. (strain Fw109-5), this protein is Ribosomal RNA large subunit methyltransferase H.